The following is a 278-amino-acid chain: Tryptophan synthase alpha chain (278 aa).

Residues Glu-50 and Asp-61 each act as proton acceptor in the active site.

It belongs to the TrpA family. As to quaternary structure, tetramer of two alpha and two beta chains.

The catalysed reaction is (1S,2R)-1-C-(indol-3-yl)glycerol 3-phosphate + L-serine = D-glyceraldehyde 3-phosphate + L-tryptophan + H2O. The protein operates within amino-acid biosynthesis; L-tryptophan biosynthesis; L-tryptophan from chorismate: step 5/5. Its function is as follows. The alpha subunit is responsible for the aldol cleavage of indoleglycerol phosphate to indole and glyceraldehyde 3-phosphate. The polypeptide is Tryptophan synthase alpha chain (Nitrobacter winogradskyi (strain ATCC 25391 / DSM 10237 / CIP 104748 / NCIMB 11846 / Nb-255)).